The chain runs to 465 residues: Cysteine--tRNA ligase (465 aa).

Cys27 provides a ligand contact to Zn(2+). Residues 29-39 (PTVYDDAHLGH) carry the 'HIGH' region motif. Cys207, His237, and Glu241 together coordinate Zn(2+). Residues 269-273 (KMSKS) carry the 'KMSKS' region motif. Lys272 provides a ligand contact to ATP.

It belongs to the class-I aminoacyl-tRNA synthetase family. As to quaternary structure, monomer. Zn(2+) serves as cofactor.

The protein localises to the cytoplasm. It catalyses the reaction tRNA(Cys) + L-cysteine + ATP = L-cysteinyl-tRNA(Cys) + AMP + diphosphate. In Helicobacter pylori (strain Shi470), this protein is Cysteine--tRNA ligase.